Here is a 1186-residue protein sequence, read N- to C-terminus: MFLKRLDVIGFKSFAERISVDFVKGVTAVVGPNGSGKSNITDAIRWVLGEQSARSLRGGKMEDIIFAGSDSRKRLNLAEVTLTLDNDDHFLPIDFHEVSVTRRVYRSGESEFLINNQPCRLKDIIDLFMDSGLGKEAFSIISQGKVEEILSSKAEDRRSIFEEAAGVLKYKTRKKKAENKLFETQDNLNRVEDILHELEGQVEPLKIQASIAKDYLEKKKELEHVEIALTAYDIEELHGKWSTLKEKVQMAKEEELAESSAISAKEAKIEDTRDKIQALDESVDELQQVLLVTSEELEKLEGRKEVLKERKKNAVQNQEQLEEAIVQFQQKETVLKEELSKQEAVFETLQAEVKQLRAQVKEKQQALSLHNENVEEKIEQLKSDYFELLNSQASIRNELQLLDDQMSQSAVTLQRLADNNEKHLQERHDISARKAACETEFARIEQEIHSQVGAYRDMQTKYEQKKRQYEKNESALYQAYQYVQQARSKKDMLETMQGDFSGFYQGVKEVLKAKERLGGIRGAVLELISTEQKYETAIEIALGASAQHVVTDDEQSARKAIQYLKQNSFGRATFLPLSVIRDRQLQSRDAETAARHSSFLGVASELVTFDPAYRSVIQNLLGTVLITEDLKGANELAKLLGHRYRIVTLEGDVVNPGGSMTGGAVKKKNNSLLGRSRELEDVTKRLAEMEEKTALLEQEVKTLKHSIQDMEKKLADLRETGEGLRLKQQDVKGQLYELQVAEKNINTHLELYDQEKSALSESDEERKVRKRKLEEELSAVSEKMKQLEEDIDRLTKQKQTQSSTKESLSNELTELKIAAAKKEQACKGEEDNLARLKKELTETELALKEAKEDLSFLTSEMSSSTSGEEKLEEAAKHKLNDKTKTIELIALRRDQRIKLQHGLDTYERELKEMKRLYKQKTTLLKDEEVKLGRMEVELDNLLQYLREEYSLSFEGAKEKYQLETDPEEARKRVKLIKLAIEELGTVNLGSIDEFERVNERYKFLSEQKEDLTEAKNTLFQVIEEMDEEMTKRFNDTFVQIRSHFDQVFRSLFGGGRAELRLTDPNDLLHSGVEIIAQPPGKKLQNLNLLSGGERALTAIALLFSILKVRPVPFCVLDEVEAALDEANVFRFAQYLKKYSSDTQFIVITHRKGTMEEADVLYGVTMQESGVSKVISVKLEETKEFVQ.

P32–N39 contributes to the ATP binding site. 2 coiled-coil regions span residues V167–K206 and S259–Q481. An SMC hinge domain is found at G519–A637. 3 coiled-coil regions span residues L672–S864, R893–Q943, and S990–M1029.

Belongs to the SMC family. Homodimer.

Its subcellular location is the cytoplasm. Functionally, required for chromosome condensation and partitioning. In Bacillus subtilis (strain 168), this protein is Chromosome partition protein Smc.